Reading from the N-terminus, the 82-residue chain is Small ribosomal subunit protein uS17 (82 aa).

Belongs to the universal ribosomal protein uS17 family. In terms of assembly, part of the 30S ribosomal subunit.

One of the primary rRNA binding proteins, it binds specifically to the 5'-end of 16S ribosomal RNA. The chain is Small ribosomal subunit protein uS17 from Paracoccus denitrificans (strain Pd 1222).